A 97-amino-acid chain; its full sequence is MALHNGPRKKTRYKFKKDLRSRGVLPVTRVIQQFELGQKVHIVCEPSIQKGMPHRRFHGKTGSVVGQRGRAWLVEIRDGNKFKTVISRPQHLRAQQF.

It belongs to the eukaryotic ribosomal protein eL21 family.

The chain is Large ribosomal subunit protein eL21 from Methanospirillum hungatei JF-1 (strain ATCC 27890 / DSM 864 / NBRC 100397 / JF-1).